A 226-amino-acid polypeptide reads, in one-letter code: Deoxyribose-phosphate aldolase (226 aa).

Aspartate 94 functions as the Proton donor/acceptor in the catalytic mechanism. Residue lysine 156 is the Schiff-base intermediate with acetaldehyde of the active site. Lysine 185 serves as the catalytic Proton donor/acceptor.

This sequence belongs to the DeoC/FbaB aldolase family. DeoC type 1 subfamily.

The protein resides in the cytoplasm. It carries out the reaction 2-deoxy-D-ribose 5-phosphate = D-glyceraldehyde 3-phosphate + acetaldehyde. It participates in carbohydrate degradation; 2-deoxy-D-ribose 1-phosphate degradation; D-glyceraldehyde 3-phosphate and acetaldehyde from 2-deoxy-alpha-D-ribose 1-phosphate: step 2/2. Its function is as follows. Catalyzes a reversible aldol reaction between acetaldehyde and D-glyceraldehyde 3-phosphate to generate 2-deoxy-D-ribose 5-phosphate. This Burkholderia orbicola (strain MC0-3) protein is Deoxyribose-phosphate aldolase.